The primary structure comprises 438 residues: Trigger factor (438 aa).

The 86-residue stretch at 160 to 245 (DDKVTIDFVG…VKKIQQAELP (86 aa)) folds into the PPIase FKBP-type domain.

Belongs to the FKBP-type PPIase family. Tig subfamily.

It localises to the cytoplasm. It carries out the reaction [protein]-peptidylproline (omega=180) = [protein]-peptidylproline (omega=0). Involved in protein export. Acts as a chaperone by maintaining the newly synthesized protein in an open conformation. Functions as a peptidyl-prolyl cis-trans isomerase. This Francisella tularensis subsp. holarctica (strain LVS) protein is Trigger factor.